Here is a 427-residue protein sequence, read N- to C-terminus: MSTNAELFDRACRSIPGGVNSPVRAFRSVGGTPRFIQRAQGPYVWDAEGKQYIDYVGSWGPAILGHAHPEVVRAVQEAAVHGLSFGAPTEAEVELAEMLIARLPSLEQVRLVSSGTEATMTAIRLARGATGRHKIIKFEGCYHGHSDSLLVKAGSGLLTFGNPSSAGVPPEFVAHTLPLEFNNLAAVDAAFSQHGAEIACVIVEPVAGNMNLIKPAEGFLAGLRELCTRHGAVLIFDEVMTGFRVGPQGVQGLTGVRPDLTTLAKVIGGGMPVGAFGGRADLMAHITPLGGVYQAGTLSGNPVAVAAGLATMRLIGEPGFYERLSAQTARLAQGLQERARAAGVPFSADAIGGMFGLYFGDRVPASFAEVSACDTEAFKRFFHAMLERGIHFAPSAFEAGFVSATHDDAVIDATLEAAEQVFATLRA.

The residue at position 265 (K265) is an N6-(pyridoxal phosphate)lysine.

The protein belongs to the class-III pyridoxal-phosphate-dependent aminotransferase family. HemL subfamily. Homodimer. The cofactor is pyridoxal 5'-phosphate.

The protein resides in the cytoplasm. It carries out the reaction (S)-4-amino-5-oxopentanoate = 5-aminolevulinate. It functions in the pathway porphyrin-containing compound metabolism; protoporphyrin-IX biosynthesis; 5-aminolevulinate from L-glutamyl-tRNA(Glu): step 2/2. In Bordetella parapertussis (strain 12822 / ATCC BAA-587 / NCTC 13253), this protein is Glutamate-1-semialdehyde 2,1-aminomutase.